A 314-amino-acid chain; its full sequence is MGARGALLLALLLARAGLRKPESQEAAPLSGPCGRRVITSRIVGGEDAELGRWPWQGSLRLWDSHVCGVSLLSHRWALTAAHCFETYSDLSDPSGWMVQFGQLTSMPSFWSLQAYYTRYFVSNIYLSPRYLGNSPYDIALVKLSAPVTYTKHIQPICLQASTFEFENRTDCWVTGWGYIKEDEALPSPHTLQEVQVAIINNSMCNHLFLKYSFRKDIFGDMVCAGNAQGGKDACFGDSGGPLACNKNGLWYQIGVVSWGVGCGRPNRPGVYTNISHHFEWIQKLMAQSGMSQPDPSWPLLFFPLLWALPLLGPV.

The signal sequence occupies residues 1–19 (MGARGALLLALLLARAGLR). A propeptide spanning residues 20–41 (KPESQEAAPLSGPCGRRVITSR) is cleaved from the precursor. Cystine bridges form between C33-C157 and C67-C83. Positions 42 to 286 (IVGGEDAELG…HFEWIQKLMA (245 aa)) constitute a Peptidase S1 domain. Residues H82 and D137 each act as charge relay system in the active site. N-linked (GlcNAc...) asparagine glycosylation is found at N167 and N200. 3 cysteine pairs are disulfide-bonded: C171–C244, C204–C223, and C234–C262. The active-site Charge relay system is the S238. N273 carries an N-linked (GlcNAc...) asparagine glycan. The GPI-anchor amidated serine moiety is linked to residue S288. A propeptide spans 289–314 (GMSQPDPSWPLLFFPLLWALPLLGPV) (removed in mature form).

This sequence belongs to the peptidase S1 family. As to expression, expressed predominantly in premeiotic testicular germ cells, mostly late pachytene and diplotene spermatocytes.

The protein resides in the cell membrane. Could regulate proteolytic events associated with testicular germ cell maturation. The chain is Testisin (PRSS21) from Homo sapiens (Human).